We begin with the raw amino-acid sequence, 511 residues long: Membrane-bound lytic murein transglycosylase F (511 aa).

An N-terminal signal peptide occupies residues 1 to 19; the sequence is MKKLKINYLLIGIVTLLLA. The non-LT domain stretch occupies residues 20–269; it reads AALWPSIPWS…RLEEKYLGHG (250 aa). Residues 270 to 511 are LT domain; that stretch reads NDFDYVDTRT…ARMKLPGHLY (242 aa). Residue E314 is part of the active site.

The protein in the N-terminal section; belongs to the bacterial solute-binding protein 3 family. This sequence in the C-terminal section; belongs to the transglycosylase Slt family.

Its subcellular location is the cell outer membrane. The enzyme catalyses Exolytic cleavage of the (1-&gt;4)-beta-glycosidic linkage between N-acetylmuramic acid (MurNAc) and N-acetylglucosamine (GlcNAc) residues in peptidoglycan, from either the reducing or the non-reducing ends of the peptidoglycan chains, with concomitant formation of a 1,6-anhydrobond in the MurNAc residue.. Murein-degrading enzyme that degrades murein glycan strands and insoluble, high-molecular weight murein sacculi, with the concomitant formation of a 1,6-anhydromuramoyl product. Lytic transglycosylases (LTs) play an integral role in the metabolism of the peptidoglycan (PG) sacculus. Their lytic action creates space within the PG sacculus to allow for its expansion as well as for the insertion of various structures such as secretion systems and flagella. The protein is Membrane-bound lytic murein transglycosylase F of Klebsiella pneumoniae subsp. pneumoniae (strain ATCC 700721 / MGH 78578).